Here is a 59-residue protein sequence, read N- to C-terminus: ATP synthase subunit J, mitochondrial (59 aa).

The chain crosses the membrane as a helical span at residues 9–25 (ILKVYWPFFVAGAAVYY).

This sequence belongs to the ATPase j subunit family. In terms of assembly, F-type ATPases have 2 components, CF(1) - the catalytic core - and CF(0) - the membrane proton channel. In yeast, the dimeric form of ATP synthase consists of 17 polypeptides: alpha, beta, gamma, delta, epsilon, 4 (B), 5 (OSCP), 6 (A), 8, 9 (C), d, E (Tim11), f, g, h, i/j and k.

The protein localises to the mitochondrion membrane. In terms of biological role, mitochondrial membrane ATP synthase (F(1)F(0) ATP synthase or Complex V) produces ATP from ADP in the presence of a proton gradient across the membrane which is generated by electron transport complexes of the respiratory chain. F-type ATPases consist of two structural domains, F(1) - containing the extramembraneous catalytic core and F(0) - containing the membrane proton channel, linked together by a central stalk and a peripheral stalk. During catalysis, ATP synthesis in the catalytic domain of F(1) is coupled via a rotary mechanism of the central stalk subunits to proton translocation. Part of the complex F(0) domain. Minor subunit located with subunit a in the membrane. This is ATP synthase subunit J, mitochondrial (ATP18) from Saccharomyces cerevisiae (strain ATCC 204508 / S288c) (Baker's yeast).